Here is a 124-residue protein sequence, read N- to C-terminus: Acidic phospholipase A2 BA1 (124 aa).

Intrachain disulfides connect Cys26–Cys116, Cys28–Cys44, Cys43–Cys95, Cys49–Cys124, Cys50–Cys88, Cys57–Cys81, and Cys75–Cys86. Positions 27, 29, and 31 each coordinate Ca(2+). Residue His47 is part of the active site. Residue Asp48 participates in Ca(2+) binding. Asp89 is a catalytic residue.

Belongs to the phospholipase A2 family. Group II subfamily. D49 sub-subfamily. It depends on Ca(2+) as a cofactor. As to expression, expressed by the venom gland.

Its subcellular location is the secreted. The catalysed reaction is a 1,2-diacyl-sn-glycero-3-phosphocholine + H2O = a 1-acyl-sn-glycero-3-phosphocholine + a fatty acid + H(+). In terms of biological role, PLA2 catalyzes the calcium-dependent hydrolysis of the 2-acyl groups in 3-sn-phosphoglycerides. This chain is Acidic phospholipase A2 BA1, found in Gloydius halys (Chinese water mocassin).